The chain runs to 223 residues: MENNIAKMIDHTLLKADATKAQIVKLCEEAKQYGFASVCVNPTWVATAAELLKGTDVKVCTVIGFPLGANTPETKAFETKNAIENGAAEVDMVINVGALKDGNDDLVERDIRAVVDVAKGKALVKVIIEACLLTEEEKVRACQLAVKAGADYVKTSTGFSTGGATPEDVALMRKTVGPNIGVKASGGVRDMQSAEAMIQAGATRIGTSSGVSIVEGKTANSNY.

The Proton donor/acceptor role is filled by Asp91. The active-site Schiff-base intermediate with acetaldehyde is the Lys154. Catalysis depends on Lys183, which acts as the Proton donor/acceptor.

The protein belongs to the DeoC/FbaB aldolase family. DeoC type 1 subfamily.

It is found in the cytoplasm. It catalyses the reaction 2-deoxy-D-ribose 5-phosphate = D-glyceraldehyde 3-phosphate + acetaldehyde. The protein operates within carbohydrate degradation; 2-deoxy-D-ribose 1-phosphate degradation; D-glyceraldehyde 3-phosphate and acetaldehyde from 2-deoxy-alpha-D-ribose 1-phosphate: step 2/2. Functionally, catalyzes a reversible aldol reaction between acetaldehyde and D-glyceraldehyde 3-phosphate to generate 2-deoxy-D-ribose 5-phosphate. This chain is Deoxyribose-phosphate aldolase, found in Geobacillus sp. (strain WCH70).